The primary structure comprises 245 residues: Polyhedrin (245 aa).

This sequence belongs to the polyhedrin family.

Major component of the virus occlusion bodies, which are large proteinaceous structures (polyhedra), that protect the virus from the outside environment for extended periods until they are ingested by insect larvae. This Hyphantria cunea nuclear polyhedrosis virus (HcNPV) protein is Polyhedrin (PH).